A 162-amino-acid polypeptide reads, in one-letter code: Cyclic pyranopterin monophosphate synthase (162 aa).

Substrate contacts are provided by residues 75–77 and 115–116; these read MCH and ME. Residue Asp130 is part of the active site.

The protein belongs to the MoaC family. As to quaternary structure, homohexamer; trimer of dimers.

It carries out the reaction (8S)-3',8-cyclo-7,8-dihydroguanosine 5'-triphosphate = cyclic pyranopterin phosphate + diphosphate. It participates in cofactor biosynthesis; molybdopterin biosynthesis. In terms of biological role, catalyzes the conversion of (8S)-3',8-cyclo-7,8-dihydroguanosine 5'-triphosphate to cyclic pyranopterin monophosphate (cPMP). The chain is Cyclic pyranopterin monophosphate synthase from Geobacillus thermodenitrificans (strain NG80-2).